The primary structure comprises 446 residues: Ribosome biogenesis protein WDR12 homolog (446 aa).

The ubiquitin-like (UBL) domain stretch occupies residues 21-105 (VQITFFSKDK…ETILKIECII (85 aa)). 2 WD repeats span residues 171–211 (KCSG…LVEK) and 216–255 (GHER…EATI). Residues 256–275 (YEKEEEESSAKKKRKKDTRT) are disordered. WD repeat units lie at residues 284-324 (GHRD…EVSR), 326-365 (KGPK…GAMV), 371-412 (GHQN…SSLF), and 416-446 (GHED…FETS).

This sequence belongs to the WD repeat WDR12/YTM1 family.

The protein localises to the nucleus. It localises to the nucleolus. The protein resides in the nucleoplasm. Functionally, required for maturation of ribosomal RNAs and formation of the large ribosomal subunit. The polypeptide is Ribosome biogenesis protein WDR12 homolog (Caenorhabditis briggsae).